The following is a 548-amino-acid chain: MASAAVANYEEEIVRPVADFSPSLWGDQFLSFSIDNQIAEKYAQEIEALKEQTRSMLLATARKLADTLNLIDTIERLGIAYHFEKEIDEILDQIYNQNSTFDDLCTSALQFRLLRQHGFNISPQIFSKFQDENGKFKESLASDVLGLLNLYEASHVRTHTDNILEDALAFSTVHLESAAPYMNSPLREQVTHALEQCLHKGVPRVETRFFISSIYEKEESKNDMLLRFAKLDFNLLQMLHKQELAEVSRWWKDLNFVTTLPYARDRVVECYFWALGVYFEPQYSQARVMLVKTISMISIVDDTFDAYGTVKELEAYTDAIQRWDINEIDRLPDYMKISYKAILDLYKDYEKELSSAGRSHIVCHAIERMKEVVRNYNVESTWFIEGYKPPVSEYLSNALATTTYYYLATTSYLGMKSVAEQDFEWLSKNPKILEASVIICRVIDDTATYEVEKSRGQIATGIECCMRDYGVSTKEAMDKFQKMAETAWKDLNEGLLRPTPISAEFLTPILNLARIVEVTYIHNLDGYTHPEKVLKPHIIDLLVESIQI.

5 residues coordinate Mg(2+): D301, D305, D444, T448, and E452. Residues 301 to 305 (DDTFD) carry the DDXXD motif motif.

The protein belongs to the terpene synthase family. In terms of assembly, monomer. Requires Mg(2+) as cofactor. As to expression, expressed in roots, but not in shoots.

It is found in the cytoplasm. The catalysed reaction is (2E,6E)-farnesyl diphosphate = (+)-5-epi-aristolochene + diphosphate. It functions in the pathway secondary metabolite biosynthesis; terpenoid biosynthesis. In terms of biological role, catalyzes the cyclization of trans,trans-farnesyl diphosphate (FPP) to the bicyclic intermediate 5-epi-aristolochene, initial step in the conversion of FPP to the sesquiterpenoid antifungal phytoalexin capsidiol. Produces germacrene A as an enzyme-bound intermediate that is not released by the enzyme, but is further cyclized to produce the bicyclic 5-epi-aristolochene. The sequence is that of 5-epi-aristolochene synthase 2 from Nicotiana attenuata (Coyote tobacco).